Here is a 111-residue protein sequence, read N- to C-terminus: uncharacterized protein (111 aa).

A helical transmembrane segment spans residues 64–86; the sequence is VLCWLVLPLYCCNLLNLFFNIFL.

The protein resides in the membrane. This is an uncharacterized protein from Saccharomyces cerevisiae (strain ATCC 204508 / S288c) (Baker's yeast).